The chain runs to 251 residues: Imidazole glycerol phosphate synthase subunit HisF (251 aa).

Catalysis depends on residues D11 and D130.

It belongs to the HisA/HisF family. As to quaternary structure, heterodimer of HisH and HisF.

The protein resides in the cytoplasm. It catalyses the reaction 5-[(5-phospho-1-deoxy-D-ribulos-1-ylimino)methylamino]-1-(5-phospho-beta-D-ribosyl)imidazole-4-carboxamide + L-glutamine = D-erythro-1-(imidazol-4-yl)glycerol 3-phosphate + 5-amino-1-(5-phospho-beta-D-ribosyl)imidazole-4-carboxamide + L-glutamate + H(+). The protein operates within amino-acid biosynthesis; L-histidine biosynthesis; L-histidine from 5-phospho-alpha-D-ribose 1-diphosphate: step 5/9. Functionally, IGPS catalyzes the conversion of PRFAR and glutamine to IGP, AICAR and glutamate. The HisF subunit catalyzes the cyclization activity that produces IGP and AICAR from PRFAR using the ammonia provided by the HisH subunit. The sequence is that of Imidazole glycerol phosphate synthase subunit HisF from Chlorobium limicola (strain DSM 245 / NBRC 103803 / 6330).